The primary structure comprises 211 residues: Ubiquitin-conjugating enzyme E2 S-C (211 aa).

In terms of domain architecture, UBC core spans 11-157 (HIIRRVYKEV…AKLMTEIHAQ (147 aa)). The active-site Glycyl thioester intermediate is cysteine 95. The tract at residues 158–211 (GSTLRGKDPTDPCSSASATVVSGDGPMAKKHAGDRDKKLAAKKKTDKKRALRRL) is disordered. Residues 197 to 211 (AAKKKTDKKRALRRL) show a composition bias toward basic residues.

The protein belongs to the ubiquitin-conjugating enzyme family.

The catalysed reaction is S-ubiquitinyl-[E1 ubiquitin-activating enzyme]-L-cysteine + [E2 ubiquitin-conjugating enzyme]-L-cysteine = [E1 ubiquitin-activating enzyme]-L-cysteine + S-ubiquitinyl-[E2 ubiquitin-conjugating enzyme]-L-cysteine.. The protein operates within protein modification; protein ubiquitination. In terms of biological role, catalyzes the covalent attachment of ubiquitin to other proteins. Acts as an essential factor of the anaphase promoting complex/cyclosome (APC/C), a cell cycle-regulated ubiquitin ligase that controls progression through mitosis. Acts by specifically elongating 'Lys-11'-linked polyubiquitin chains initiated by the E2 enzyme ube2c/ubch10 on APC/C substrates, enhancing the degradation of APC/C substrates by the proteasome and promoting mitotic exit. The protein is Ubiquitin-conjugating enzyme E2 S-C (ube2s-c) of Xenopus laevis (African clawed frog).